Reading from the N-terminus, the 164-residue chain is ATP synthase subunit b (164 aa).

Residues 6 to 26 (GELIGNFILITGSFILLLVLI) traverse the membrane as a helical segment.

This sequence belongs to the ATPase B chain family. As to quaternary structure, F-type ATPases have 2 components, F(1) - the catalytic core - and F(0) - the membrane proton channel. F(1) has five subunits: alpha(3), beta(3), gamma(1), delta(1), epsilon(1). F(0) has three main subunits: a(1), b(2) and c(10-14). The alpha and beta chains form an alternating ring which encloses part of the gamma chain. F(1) is attached to F(0) by a central stalk formed by the gamma and epsilon chains, while a peripheral stalk is formed by the delta and b chains.

Its subcellular location is the cell membrane. F(1)F(0) ATP synthase produces ATP from ADP in the presence of a proton or sodium gradient. F-type ATPases consist of two structural domains, F(1) containing the extramembraneous catalytic core and F(0) containing the membrane proton channel, linked together by a central stalk and a peripheral stalk. During catalysis, ATP synthesis in the catalytic domain of F(1) is coupled via a rotary mechanism of the central stalk subunits to proton translocation. In terms of biological role, component of the F(0) channel, it forms part of the peripheral stalk, linking F(1) to F(0). This is ATP synthase subunit b from Streptococcus pneumoniae serotype 2 (strain D39 / NCTC 7466).